The primary structure comprises 352 residues: Uricase (352 aa).

A disordered region spans residues 1 to 32 (MFATPLRQPAAANHQTPKNSAGMDEHGKPYQY). Residues 23–32 (MDEHGKPYQY) are compositionally biased toward basic and acidic residues. Residues K41 and T86 each act as charge relay system in the active site. The urate site is built by T86, D87, F214, R231, V279, Q280, and N306. H308 serves as the catalytic Charge relay system. The short motif at 350–352 (SHL) is the Microbody targeting signal element.

This sequence belongs to the uricase family. Malpighian tubules.

It is found in the peroxisome. It carries out the reaction urate + O2 + H2O = 5-hydroxyisourate + H2O2. It participates in purine metabolism; urate degradation; (S)-allantoin from urate: step 1/3. Its activity is regulated as follows. Repressed by 20-hydroxyecdysone. In terms of biological role, catalyzes the oxidation of uric acid to 5-hydroxyisourate, which is further processed to form (S)-allantoin. This is Uricase (Uro) from Drosophila melanogaster (Fruit fly).